The primary structure comprises 68 residues: 1-carboxybiuret hydrolase subunit AtzG (68 aa).

In terms of assembly, heterotetramer consisting of 2 AtzE and 2 AtzG subunits.

The protein operates within xenobiotic degradation; atrazine degradation. Functionally, important for the activity of the AtzE subunit of 1-carboxybiuret hydrolase. The polypeptide is 1-carboxybiuret hydrolase subunit AtzG (Pseudomonas sp. (strain ADP)).